Reading from the N-terminus, the 184-residue chain is Ribosome-recycling factor (184 aa).

The protein belongs to the RRF family.

The protein resides in the cytoplasm. Its function is as follows. Responsible for the release of ribosomes from messenger RNA at the termination of protein biosynthesis. May increase the efficiency of translation by recycling ribosomes from one round of translation to another. This is Ribosome-recycling factor from Bifidobacterium adolescentis (strain ATCC 15703 / DSM 20083 / NCTC 11814 / E194a).